The primary structure comprises 322 residues: Nuclease 1, mitochondrial (322 aa).

Residue H142 is the Proton acceptor of the active site. Residue N174 participates in Mg(2+) binding.

This sequence belongs to the DNA/RNA non-specific endonuclease family. In terms of assembly, homodimer. The cofactor is Mn(2+). It depends on Mg(2+) as a cofactor.

It localises to the mitochondrion inner membrane. Its function is as follows. This enzyme has both RNase and DNase activity. It degrades single-stranded DNA and RNA. This chain is Nuclease 1, mitochondrial (pnu1), found in Schizosaccharomyces pombe (strain 972 / ATCC 24843) (Fission yeast).